We begin with the raw amino-acid sequence, 706 residues long: Semenogelin-2 (706 aa).

The N-terminal stretch at 1-23 (MKSIILFVLSLLLILEKQAAVMG) is a signal peptide. 3 disordered regions span residues 25-62 (KGGS…SKGS), 131-156 (KGGQ…KGIF), and 276-678 (NLNQ…SGAH). Positions 50–59 (GQKDKQHTES) are enriched in basic and acidic residues. Positions 137-151 (HGTQNPSQDQGNSPS) are enriched in polar residues. Residues 297 to 308 (TEERQPNHEENS) are compositionally biased toward basic and acidic residues. Residues 329–339 (KSQNQVTIPSQ) show a composition bias toward polar residues. Residues 340–349 (DQEHGHKENK) are compositionally biased toward basic and acidic residues. Over residues 389–399 (KSQNQVTIPSQ) the composition is skewed to polar residues. Residues 400-409 (DQEHGHKENK) are compositionally biased toward basic and acidic residues. A compositionally biased stretch (polar residues) spans 449–459 (KSQNQVTIPSQ). Over residues 460–469 (DQEHGHKENK) the composition is skewed to basic and acidic residues. Residues 509–519 (KSQNQVAIPSQ) are compositionally biased toward polar residues. Over residues 520-529 (DQEHGHKENK) the composition is skewed to basic and acidic residues. Residues 569-579 (KSQNQVTIPSQ) are compositionally biased toward polar residues. Basic and acidic residues predominate over residues 580–589 (DQEHGHKENK). Composition is skewed to polar residues over residues 611–622 (KDVSQSSLSFQT) and 630–653 (SQIQ…NSGK). The span at 654–670 (SADREQDLLSHEQEGRY) shows a compositional bias: basic and acidic residues.

It belongs to the semenogelin family. Interacts with SERPINA5.

Its subcellular location is the secreted. Functionally, participates in the formation of a gel matrix (sperm coagulum) entrapping the accessory gland secretions and ejaculated spermatozoa. In Macaca mulatta (Rhesus macaque), this protein is Semenogelin-2 (SEMG2).